A 251-amino-acid polypeptide reads, in one-letter code: Phosphomannomutase (251 aa).

Asp18 acts as the Nucleophile in catalysis. Residues Asp18 and Asp20 each coordinate Mg(2+). Asp20 (proton donor/acceptor) is an active-site residue. Alpha-D-mannose 1-phosphate contacts are provided by Arg27, Arg129, Arg140, Arg147, Ser185, and Asp187. Mg(2+) contacts are provided by Asp213, Phe225, Asp227, and Thr230.

This sequence belongs to the eukaryotic PMM family. In terms of assembly, homodimer. Mg(2+) is required as a cofactor.

The protein resides in the cytoplasm. The enzyme catalyses alpha-D-mannose 1-phosphate = D-mannose 6-phosphate. It participates in nucleotide-sugar biosynthesis; GDP-alpha-D-mannose biosynthesis; alpha-D-mannose 1-phosphate from D-fructose 6-phosphate: step 2/2. In terms of biological role, catalyzes the interconversion of mannose-6-phosphate to mannose-1-phosphate, the precursor for the synthesis of GDP-mannose. GDP-mannose is an essential sugar nucleotide for the synthesis of D-mannose-containing cell wall polysaccharides (galactomannans and glucomannans), glycolipids, glycoproteins and the antioxidant L-ascorbate. The polypeptide is Phosphomannomutase (Galdieria sulphuraria (Red alga)).